We begin with the raw amino-acid sequence, 109 residues long: ATP-dependent Clp protease adapter protein ClpS (109 aa).

It belongs to the ClpS family. As to quaternary structure, binds to the N-terminal domain of the chaperone ClpA.

Its function is as follows. Involved in the modulation of the specificity of the ClpAP-mediated ATP-dependent protein degradation. This is ATP-dependent Clp protease adapter protein ClpS from Lawsonia intracellularis (strain PHE/MN1-00).